A 156-amino-acid chain; its full sequence is Peptide methionine sulfoxide reductase MsrA (156 aa).

The active site involves Cys10.

Belongs to the MsrA Met sulfoxide reductase family.

It carries out the reaction L-methionyl-[protein] + [thioredoxin]-disulfide + H2O = L-methionyl-(S)-S-oxide-[protein] + [thioredoxin]-dithiol. The catalysed reaction is [thioredoxin]-disulfide + L-methionine + H2O = L-methionine (S)-S-oxide + [thioredoxin]-dithiol. Its function is as follows. Has an important function as a repair enzyme for proteins that have been inactivated by oxidation. Catalyzes the reversible oxidation-reduction of methionine sulfoxide in proteins to methionine. This Acidobacterium capsulatum (strain ATCC 51196 / DSM 11244 / BCRC 80197 / JCM 7670 / NBRC 15755 / NCIMB 13165 / 161) protein is Peptide methionine sulfoxide reductase MsrA.